The primary structure comprises 465 residues: Cysteine--tRNA ligase (465 aa).

Cys-30 is a binding site for Zn(2+). Residues 32–42 (MTVYDYCHVGH) carry the 'HIGH' region motif. Residues Cys-214, His-239, and Glu-243 each coordinate Zn(2+). Residues 271–275 (KMSKS) carry the 'KMSKS' region motif. Residue Lys-274 participates in ATP binding.

This sequence belongs to the class-I aminoacyl-tRNA synthetase family. As to quaternary structure, monomer. Zn(2+) is required as a cofactor.

Its subcellular location is the cytoplasm. It catalyses the reaction tRNA(Cys) + L-cysteine + ATP = L-cysteinyl-tRNA(Cys) + AMP + diphosphate. The protein is Cysteine--tRNA ligase of Paraburkholderia xenovorans (strain LB400).